The primary structure comprises 471 residues: Serine hydroxymethyltransferase, cytosolic (471 aa).

K249 carries the N6-(pyridoxal phosphate)lysine modification.

Belongs to the SHMT family. It depends on pyridoxal 5'-phosphate as a cofactor.

The protein resides in the cytoplasm. It is found in the cytosol. It carries out the reaction (6R)-5,10-methylene-5,6,7,8-tetrahydrofolate + glycine + H2O = (6S)-5,6,7,8-tetrahydrofolate + L-serine. It participates in one-carbon metabolism; tetrahydrofolate interconversion. Functionally, catalyzes the interconversion of serine and glycine. Essential for viability and required for virulence in a murine model of established pulmonary infection. The protein is Serine hydroxymethyltransferase, cytosolic of Aspergillus fumigatus (strain ATCC MYA-4609 / CBS 101355 / FGSC A1100 / Af293) (Neosartorya fumigata).